We begin with the raw amino-acid sequence, 422 residues long: Enolase (422 aa).

Gln161 contributes to the (2R)-2-phosphoglycerate binding site. Glu203 (proton donor) is an active-site residue. Mg(2+) is bound by residues Asp240, Glu283, and Asp310. Residues Lys335, Arg364, Ser365, and Lys386 each coordinate (2R)-2-phosphoglycerate. Residue Lys335 is the Proton acceptor of the active site.

The protein belongs to the enolase family. The cofactor is Mg(2+).

The protein localises to the cytoplasm. The protein resides in the secreted. It is found in the cell surface. The catalysed reaction is (2R)-2-phosphoglycerate = phosphoenolpyruvate + H2O. It participates in carbohydrate degradation; glycolysis; pyruvate from D-glyceraldehyde 3-phosphate: step 4/5. In terms of biological role, catalyzes the reversible conversion of 2-phosphoglycerate (2-PG) into phosphoenolpyruvate (PEP). It is essential for the degradation of carbohydrates via glycolysis. The protein is Enolase of Deinococcus radiodurans (strain ATCC 13939 / DSM 20539 / JCM 16871 / CCUG 27074 / LMG 4051 / NBRC 15346 / NCIMB 9279 / VKM B-1422 / R1).